Here is a 154-residue protein sequence, read N- to C-terminus: Hydroperoxy fatty acid reductase Gpx2 (154 aa).

Residue Cys-34 is part of the active site.

This sequence belongs to the glutathione peroxidase family. In terms of assembly, monomer.

The catalysed reaction is a hydroperoxy polyunsaturated fatty acid + NADPH + H(+) = a hydroxy polyunsaturated fatty acid + NADP(+) + H2O. Its activity is regulated as follows. Mercaptosuccinate, pCMB, and nethylmaleimide act as inhibitors of the catalytic activity. Functionally, hydroperoxy fatty acid reductase essential for the removal of lipid hydroperoxides under normal and stress conditions, leading to the protection of membrane integrity. The polypeptide is Hydroperoxy fatty acid reductase Gpx2 (gpx2) (Synechocystis sp. (strain ATCC 27184 / PCC 6803 / Kazusa)).